Consider the following 291-residue polypeptide: 4-diphosphocytidyl-2-C-methyl-D-erythritol kinase (291 aa).

Lysine 11 is an active-site residue. 97-107 serves as a coordination point for ATP; that stretch reads PVAAGIGGGSS. The active site involves aspartate 139.

The protein belongs to the GHMP kinase family. IspE subfamily.

It catalyses the reaction 4-CDP-2-C-methyl-D-erythritol + ATP = 4-CDP-2-C-methyl-D-erythritol 2-phosphate + ADP + H(+). The protein operates within isoprenoid biosynthesis; isopentenyl diphosphate biosynthesis via DXP pathway; isopentenyl diphosphate from 1-deoxy-D-xylulose 5-phosphate: step 3/6. Catalyzes the phosphorylation of the position 2 hydroxy group of 4-diphosphocytidyl-2C-methyl-D-erythritol. This is 4-diphosphocytidyl-2-C-methyl-D-erythritol kinase from Methylorubrum extorquens (strain PA1) (Methylobacterium extorquens).